The sequence spans 437 residues: Chromosomal replication initiator protein DnaA (437 aa).

The interval 1-72 is domain I, interacts with DnaA modulators; the sequence is MEQFNAFKSL…ESLYEGIKSV (72 aa). Positions 72 to 99 are domain II; the sequence is VNFVNEQDFFFNLAKLEENSRDTLYQNS. Residues 100–320 are domain III, AAA+ region; the sequence is GLSKNYTFQN…GIATKLLFFA (221 aa). ATP contacts are provided by glycine 144, glycine 146, lysine 147, and threonine 148. A domain IV, binds dsDNA region spans residues 321-437; that stretch reads KTSKQNLINT…LRDVITSLVI (117 aa).

The protein belongs to the DnaA family. As to quaternary structure, oligomerizes as a right-handed, spiral filament on DNA at oriC.

It localises to the cytoplasm. Functionally, plays an essential role in the initiation and regulation of chromosomal replication. ATP-DnaA binds to the origin of replication (oriC) to initiate formation of the DNA replication initiation complex once per cell cycle. Binds the DnaA box (a 9 base pair repeat at the origin) and separates the double-stranded (ds)DNA. Forms a right-handed helical filament on oriC DNA; dsDNA binds to the exterior of the filament while single-stranded (ss)DNA is stabiized in the filament's interior. The ATP-DnaA-oriC complex binds and stabilizes one strand of the AT-rich DNA unwinding element (DUE), permitting loading of DNA polymerase. After initiation quickly degrades to an ADP-DnaA complex that is not apt for DNA replication. Binds acidic phospholipids. The polypeptide is Chromosomal replication initiator protein DnaA (Mycoplasma genitalium (strain ATCC 33530 / DSM 19775 / NCTC 10195 / G37) (Mycoplasmoides genitalium)).